The chain runs to 133 residues: ATP synthase epsilon chain, chloroplastic (133 aa).

Belongs to the ATPase epsilon chain family. As to quaternary structure, F-type ATPases have 2 components, CF(1) - the catalytic core - and CF(0) - the membrane proton channel. CF(1) has five subunits: alpha(3), beta(3), gamma(1), delta(1), epsilon(1). CF(0) has three main subunits: a, b and c.

Its subcellular location is the plastid. It is found in the chloroplast thylakoid membrane. Functionally, produces ATP from ADP in the presence of a proton gradient across the membrane. In Lotus japonicus (Lotus corniculatus var. japonicus), this protein is ATP synthase epsilon chain, chloroplastic.